The primary structure comprises 276 residues: Putative pyridoxine kinase (276 aa).

N139 provides a ligand contact to ATP. E142 serves as a coordination point for Mg(2+). ATP is bound by residues 176–180 (KGGKA), D188, G213, and K238.

It belongs to the ThiD family.

The enzyme catalyses pyridoxal + ATP = pyridoxal 5'-phosphate + ADP + H(+). In terms of biological role, phosphorylates B6 vitamers; functions in a salvage pathway. Uses pyridoxal, pyridoxine, and pyridoxamine as substrates. The protein is Putative pyridoxine kinase (pdxK) of Staphylococcus epidermidis (strain ATCC 12228 / FDA PCI 1200).